The following is a 128-amino-acid chain: Glycine cleavage system H protein (128 aa).

The region spanning 23–105 (KVRIGITDFA…YEKAWMIVVE (83 aa)) is the Lipoyl-binding domain. Lysine 64 carries the N6-lipoyllysine modification.

The protein belongs to the GcvH family. As to quaternary structure, the glycine cleavage system is composed of four proteins: P, T, L and H. Requires (R)-lipoate as cofactor.

In terms of biological role, the glycine cleavage system catalyzes the degradation of glycine. The H protein shuttles the methylamine group of glycine from the P protein to the T protein. Functionally, is also involved in protein lipoylation via its role as an octanoyl/lipoyl carrier protein intermediate. This chain is Glycine cleavage system H protein, found in Halalkalibacterium halodurans (strain ATCC BAA-125 / DSM 18197 / FERM 7344 / JCM 9153 / C-125) (Bacillus halodurans).